A 191-amino-acid chain; its full sequence is Dephospho-CoA kinase (191 aa).

Residues 3–191 (AIGITGSYAS…KLILVIARKL (189 aa)) enclose the DPCK domain. 11–16 (ASGKTF) contributes to the ATP binding site.

It belongs to the CoaE family.

The protein resides in the cytoplasm. It carries out the reaction 3'-dephospho-CoA + ATP = ADP + CoA + H(+). The protein operates within cofactor biosynthesis; coenzyme A biosynthesis; CoA from (R)-pantothenate: step 5/5. In terms of biological role, catalyzes the phosphorylation of the 3'-hydroxyl group of dephosphocoenzyme A to form coenzyme A. This chain is Dephospho-CoA kinase, found in Rickettsia felis (strain ATCC VR-1525 / URRWXCal2) (Rickettsia azadi).